Here is a 369-residue protein sequence, read N- to C-terminus: tRNA pseudouridine synthase D (369 aa).

The active-site Nucleophile is the D80. The region spanning 156–318 is the TRUD domain; that stretch reads GIPNWFGEQR…LKQERRALRL (163 aa).

It belongs to the pseudouridine synthase TruD family.

The catalysed reaction is uridine(13) in tRNA = pseudouridine(13) in tRNA. Responsible for synthesis of pseudouridine from uracil-13 in transfer RNAs. The polypeptide is tRNA pseudouridine synthase D (Xanthomonas axonopodis pv. citri (strain 306)).